The following is a 520-amino-acid chain: MSNNSNNNIKTYYIIGIITLIFIVSAVIKNQLSSSNQEQQEEEEETDSMGKSKGRGNKKGKKPEKIQEKKLDNHLKNLEKVKLQEDFKLQQDEKQQLKKEETILVEKQEIVVDELKNKKDEEKQQQQQEEDQQQQQQQQQEEEEEEEEQQEIEEDEEEEEGQEQEEEEEQQEIEEGEEEQQEEEQEEEQFSMFGVSIERLMDFQRQEDENEGSDEVEESSKVPIVLSFMLDRIKNLNGFKTEGLFRVNGNLKLVEQLATEGFDPFSDDLDPNVNTWASLLKKWIRDLPEPLIPHELNPIILDFCTNNNINNTCNNNNDNNNNNNFNVCASTNNLGNVLNLSTNICNNNNNNNNNNNNNNNNNNNNDNNNNNNESIEKKITNIINMIKSDDHRNVLYKIGEFFGEMLQEETVLITKINVESLSKILTPSLFKPNNIIDDFSNGSLNGSGNQIPKYLTTLDLPSILLKQKKEIAFVSCLLNYFKDEYSKKLQEQNDQEEDNQEEEKDNQEEDEDEEDKDQEE.

A helical membrane pass occupies residues 8–28; sequence NIKTYYIIGIITLIFIVSAVI. The stretch at 28–192 forms a coiled coil; sequence IKNQLSSSNQ…EEQEEEQFSM (165 aa). 4 disordered regions span residues 33–73, 121–189, 348–373, and 489–520; these read SSSN…KLDN, EEKQ…EEEQ, NNNN…NNNE, and LQEQ…DQEE. The span at 52–62 shows a compositional bias: basic residues; it reads SKGRGNKKGKK. The span at 63 to 73 shows a compositional bias: basic and acidic residues; sequence PEKIQEKKLDN. Acidic residues predominate over residues 140 to 189; that stretch reads QEEEEEEEEQQEIEEDEEEEEGQEQEEEEEQQEIEEGEEEQQEEEQEEEQ. One can recognise a Rho-GAP domain in the interval 195-472; it reads VSIERLMDFQ…ILLKQKKEIA (278 aa). Positions 348–372 are enriched in low complexity; it reads NNNNNNNNNNNNNNNNNNDNNNNNN. Residues 480-520 adopt a coiled-coil conformation; that stretch reads YFKDEYSKKLQEQNDQEEDNQEEEKDNQEEDEDEEDKDQEE. Residues 493 to 520 show a composition bias toward acidic residues; that stretch reads NDQEEDNQEEEKDNQEEDEDEEDKDQEE.

It is found in the membrane. In terms of biological role, rho GTPase-activating protein involved in the signal transduction pathway. In Dictyostelium discoideum (Social amoeba), this protein is Rho GTPase-activating protein gacV (gacV).